The following is a 637-amino-acid chain: Phosphomethylpyrimidine synthase (637 aa).

Substrate-binding positions include asparagine 242, methionine 271, tyrosine 300, histidine 336, 356–358 (SRG), 397–400 (DGLR), and glutamate 436. Histidine 440 contributes to the Zn(2+) binding site. Tyrosine 463 lines the substrate pocket. Residue histidine 504 coordinates Zn(2+). [4Fe-4S] cluster-binding residues include cysteine 584, cysteine 587, and cysteine 592.

This sequence belongs to the ThiC family. Homodimer. Requires [4Fe-4S] cluster as cofactor.

It catalyses the reaction 5-amino-1-(5-phospho-beta-D-ribosyl)imidazole + S-adenosyl-L-methionine = 4-amino-2-methyl-5-(phosphooxymethyl)pyrimidine + CO + 5'-deoxyadenosine + formate + L-methionine + 3 H(+). It functions in the pathway cofactor biosynthesis; thiamine diphosphate biosynthesis. In terms of biological role, catalyzes the synthesis of the hydroxymethylpyrimidine phosphate (HMP-P) moiety of thiamine from aminoimidazole ribotide (AIR) in a radical S-adenosyl-L-methionine (SAM)-dependent reaction. The chain is Phosphomethylpyrimidine synthase from Bordetella pertussis (strain Tohama I / ATCC BAA-589 / NCTC 13251).